Consider the following 229-residue polypeptide: Potassium/proton antiporter CemA (229 aa).

The next 3 membrane-spanning stretches (helical) occupy residues 6–26 (AFIPFFDFTSIVFLPWLISLC), 107–127 (ILHFSTNLISFVILSGYSFWG), and 189–209 (ILSGLVSTFPVILDTIFKYWI).

This sequence belongs to the CemA family.

It is found in the plastid. The protein localises to the chloroplast inner membrane. The enzyme catalyses K(+)(in) + H(+)(out) = K(+)(out) + H(+)(in). Contributes to K(+)/H(+) antiport activity by supporting proton efflux to control proton extrusion and homeostasis in chloroplasts in a light-dependent manner to modulate photosynthesis. Prevents excessive induction of non-photochemical quenching (NPQ) under continuous-light conditions. Indirectly promotes efficient inorganic carbon uptake into chloroplasts. The sequence is that of Potassium/proton antiporter CemA from Lepidium virginicum (Virginia pepperweed).